Consider the following 72-residue polypeptide: UPF0352 protein SO_2176 (72 aa).

This sequence belongs to the UPF0352 family.

This chain is UPF0352 protein SO_2176, found in Shewanella oneidensis (strain ATCC 700550 / JCM 31522 / CIP 106686 / LMG 19005 / NCIMB 14063 / MR-1).